A 337-amino-acid chain; its full sequence is tRNA N6-adenosine threonylcarbamoyltransferase (337 aa).

Fe cation contacts are provided by H111 and H115. Residues 134-138, D167, G180, and N272 each bind substrate; that span reads LVSGG. D300 contributes to the Fe cation binding site.

Belongs to the KAE1 / TsaD family. Fe(2+) is required as a cofactor.

It localises to the cytoplasm. It carries out the reaction L-threonylcarbamoyladenylate + adenosine(37) in tRNA = N(6)-L-threonylcarbamoyladenosine(37) in tRNA + AMP + H(+). Its function is as follows. Required for the formation of a threonylcarbamoyl group on adenosine at position 37 (t(6)A37) in tRNAs that read codons beginning with adenine. Is involved in the transfer of the threonylcarbamoyl moiety of threonylcarbamoyl-AMP (TC-AMP) to the N6 group of A37, together with TsaE and TsaB. TsaD likely plays a direct catalytic role in this reaction. This Shewanella amazonensis (strain ATCC BAA-1098 / SB2B) protein is tRNA N6-adenosine threonylcarbamoyltransferase.